The chain runs to 255 residues: Large ribosomal subunit protein uL4 (255 aa).

It belongs to the universal ribosomal protein uL4 family. In terms of assembly, part of the 50S ribosomal subunit.

Functionally, one of the primary rRNA binding proteins, this protein initially binds near the 5'-end of the 23S rRNA. It is important during the early stages of 50S assembly. It makes multiple contacts with different domains of the 23S rRNA in the assembled 50S subunit and ribosome. Its function is as follows. Forms part of the polypeptide exit tunnel. The protein is Large ribosomal subunit protein uL4 of Pyrococcus furiosus (strain ATCC 43587 / DSM 3638 / JCM 8422 / Vc1).